The chain runs to 187 residues: EP300-interacting inhibitor of differentiation 1 (187 aa).

A disordered region spans residues 1–118 (MSEMAELSEL…YDYPEEEQLS (118 aa)). 2 stretches are compositionally biased toward acidic residues: residues 52 to 63 (LEEEGPMEEEEA) and 93 to 116 (FESE…EEEQ). The interval 54–120 (EEGPMEEEEA…YPEEEQLSGA (67 aa)) is interaction with NR0B2. The LXCXE motif motif lies at 178 to 182 (LGCDE).

Interacts via its LXCXE motif with the entire pocket region of RB1. Interacts with EP300, NR0B2 and TRIM27. Ubiquitinated in U2OS osteosarcoma cells and is rapidly degraded by proteasome as cells exit the cell cycle exit. As to expression, widely expressed. Most abundantly expressed in heart, skeletal muscle, pancreas, brain and testis. Expressed at much lower levels in placenta and peripheral blood leukocyte. Barely detectable in lung. Also weakly expressed in lung carcinoma A-549 and various leukemia cell lines.

The protein resides in the nucleus. It is found in the cytoplasm. Interacts with RB1 and EP300 and acts as a repressor of MYOD1 transactivation. Inhibits EP300 and CBP histone acetyltransferase activity. May be involved in coupling cell cycle exit to the transcriptional activation of genes required for cellular differentiation. May act as a candidate coinhibitory factor for NR0B2 that can be directly linked to transcription inhibitory mechanisms. The chain is EP300-interacting inhibitor of differentiation 1 from Homo sapiens (Human).